A 207-amino-acid polypeptide reads, in one-letter code: GTP cyclohydrolase-2 (207 aa).

49–53 (RTHSE) lines the GTP pocket. Positions 54, 65, and 67 each coordinate Zn(2+). GTP-binding positions include glutamine 70, 92–94 (EGR), and threonine 114. Residue aspartate 126 is the Proton acceptor of the active site. Residue arginine 128 is the Nucleophile of the active site. 2 residues coordinate GTP: threonine 149 and lysine 154.

Belongs to the GTP cyclohydrolase II family. The cofactor is Zn(2+).

It catalyses the reaction GTP + 4 H2O = 2,5-diamino-6-hydroxy-4-(5-phosphoribosylamino)-pyrimidine + formate + 2 phosphate + 3 H(+). Its pathway is cofactor biosynthesis; riboflavin biosynthesis; 5-amino-6-(D-ribitylamino)uracil from GTP: step 1/4. Its function is as follows. Catalyzes the conversion of GTP to 2,5-diamino-6-ribosylamino-4(3H)-pyrimidinone 5'-phosphate (DARP), formate and pyrophosphate. The polypeptide is GTP cyclohydrolase-2 (Hahella chejuensis (strain KCTC 2396)).